The chain runs to 471 residues: Alpha-galactosidase 6 (471 aa).

An N-terminal signal peptide occupies residues 1 to 18 (MFAFYFLTACISLKGVFG). Cysteines 42 and 74 form a disulfide. Substrate is bound by residues aspartate 72 and aspartate 73. Residue asparagine 105 is glycosylated (N-linked (GlcNAc...) asparagine). A disulfide bridge connects residues cysteine 121 and cysteine 151. Residue lysine 147 coordinates substrate. Aspartate 149 functions as the Nucleophile in the catalytic mechanism. An N-linked (GlcNAc...) asparagine glycan is attached at asparagine 175. Arginine 205 is a binding site for substrate. Aspartate 209 acts as the Proton donor in catalysis. Cystine bridges form between cysteine 221–cysteine 237 and cysteine 223–cysteine 230. Glutamine 251 serves as a coordination point for substrate. 6 N-linked (GlcNAc...) asparagine glycosylation sites follow: asparagine 270, asparagine 370, asparagine 403, asparagine 422, asparagine 435, and asparagine 454.

Belongs to the glycosyl hydrolase 27 family. Homotetramer.

It localises to the secreted. The enzyme catalyses Hydrolysis of terminal, non-reducing alpha-D-galactose residues in alpha-D-galactosides, including galactose oligosaccharides, galactomannans and galactolipids.. The sequence is that of Alpha-galactosidase 6 (MEL6) from Saccharomyces cerevisiae (Baker's yeast).